Consider the following 216-residue polypeptide: 3-isopropylmalate dehydratase small subunit (216 aa).

Belongs to the LeuD family. LeuD type 1 subfamily. Heterodimer of LeuC and LeuD.

It carries out the reaction (2R,3S)-3-isopropylmalate = (2S)-2-isopropylmalate. It functions in the pathway amino-acid biosynthesis; L-leucine biosynthesis; L-leucine from 3-methyl-2-oxobutanoate: step 2/4. Its function is as follows. Catalyzes the isomerization between 2-isopropylmalate and 3-isopropylmalate, via the formation of 2-isopropylmaleate. The polypeptide is 3-isopropylmalate dehydratase small subunit (Methylibium petroleiphilum (strain ATCC BAA-1232 / LMG 22953 / PM1)).